We begin with the raw amino-acid sequence, 933 residues long: Protein translocase subunit SecA (933 aa).

ATP is bound by residues Gln90, 108-112 (GEGKT), and Asp504. A disordered region spans residues 539–570 (GMGSNNRRPQGFGQDSKKKKWQPSADIFPTDL).

This sequence belongs to the SecA family. As to quaternary structure, monomer and homodimer. Part of the essential Sec protein translocation apparatus which comprises SecA, SecYEG and auxiliary proteins SecDF. Other proteins may also be involved.

The protein resides in the cell inner membrane. It localises to the cellular thylakoid membrane. The protein localises to the cytoplasm. The catalysed reaction is ATP + H2O + cellular proteinSide 1 = ADP + phosphate + cellular proteinSide 2.. Its function is as follows. Part of the Sec protein translocase complex. Interacts with the SecYEG preprotein conducting channel. Has a central role in coupling the hydrolysis of ATP to the transfer of proteins into and across the cell membrane, serving as an ATP-driven molecular motor driving the stepwise translocation of polypeptide chains across the membrane. In terms of biological role, probably participates in protein translocation into and across both the cytoplasmic and thylakoid membranes in cyanobacterial cells. The sequence is that of Protein translocase subunit SecA from Crocosphaera subtropica (strain ATCC 51142 / BH68) (Cyanothece sp. (strain ATCC 51142)).